Reading from the N-terminus, the 295-residue chain is UDP-N-acetylenolpyruvoylglucosamine reductase (295 aa).

The 165-residue stretch at 24–188 (KVGGNAEIFF…LKAIFKANKG (165 aa)) folds into the FAD-binding PCMH-type domain. Residue Arg168 is part of the active site. The active-site Proton donor is Ser217. Residue Glu287 is part of the active site.

Belongs to the MurB family. It depends on FAD as a cofactor.

It is found in the cytoplasm. The enzyme catalyses UDP-N-acetyl-alpha-D-muramate + NADP(+) = UDP-N-acetyl-3-O-(1-carboxyvinyl)-alpha-D-glucosamine + NADPH + H(+). The protein operates within cell wall biogenesis; peptidoglycan biosynthesis. Cell wall formation. This chain is UDP-N-acetylenolpyruvoylglucosamine reductase, found in Rickettsia typhi (strain ATCC VR-144 / Wilmington).